The following is a 200-amino-acid chain: ATP-dependent Clp protease proteolytic subunit (200 aa).

S96 functions as the Nucleophile in the catalytic mechanism. H121 is a catalytic residue.

Belongs to the peptidase S14 family. As to quaternary structure, fourteen ClpP subunits assemble into 2 heptameric rings which stack back to back to give a disk-like structure with a central cavity, resembling the structure of eukaryotic proteasomes.

It localises to the cytoplasm. The catalysed reaction is Hydrolysis of proteins to small peptides in the presence of ATP and magnesium. alpha-casein is the usual test substrate. In the absence of ATP, only oligopeptides shorter than five residues are hydrolyzed (such as succinyl-Leu-Tyr-|-NHMec, and Leu-Tyr-Leu-|-Tyr-Trp, in which cleavage of the -Tyr-|-Leu- and -Tyr-|-Trp bonds also occurs).. Its function is as follows. Cleaves peptides in various proteins in a process that requires ATP hydrolysis. Has a chymotrypsin-like activity. Plays a major role in the degradation of misfolded proteins. The protein is ATP-dependent Clp protease proteolytic subunit of Leuconostoc citreum (strain KM20).